Reading from the N-terminus, the 305-residue chain is Sulfate adenylyltransferase subunit 2 (305 aa).

Belongs to the PAPS reductase family. CysD subfamily. In terms of assembly, heterodimer composed of CysD, the smaller subunit, and CysN.

The enzyme catalyses sulfate + ATP + H(+) = adenosine 5'-phosphosulfate + diphosphate. Its pathway is sulfur metabolism; hydrogen sulfide biosynthesis; sulfite from sulfate: step 1/3. With CysN forms the ATP sulfurylase (ATPS) that catalyzes the adenylation of sulfate producing adenosine 5'-phosphosulfate (APS) and diphosphate, the first enzymatic step in sulfur assimilation pathway. APS synthesis involves the formation of a high-energy phosphoric-sulfuric acid anhydride bond driven by GTP hydrolysis by CysN coupled to ATP hydrolysis by CysD. This Myxococcus xanthus (strain DK1622) protein is Sulfate adenylyltransferase subunit 2.